Reading from the N-terminus, the 194-residue chain is UPF0301 protein BPEN_258 (194 aa).

It belongs to the UPF0301 (AlgH) family.

The chain is UPF0301 protein BPEN_258 from Blochmanniella pennsylvanica (strain BPEN).